The chain runs to 559 residues: Chromatin assembly factor 1 subunit B (559 aa).

7 WD repeats span residues 11–54, 64–103, 127–166, 169–208, 228–279, 299–340, and 344–385; these read HNKE…DGKA, RHTK…EPEQ, GHLE…KISI, EHKS…VAFN, FHDD…RPIA, ELRP…PFGY, and IHYH…IPLK. The tract at residues 386–559 is disordered; that stretch reads EKPVLNMRTP…NKGGTESLDP (174 aa). The residue at position 394 (threonine 394) is a Phosphothreonine. Position 409 is a phosphoserine (serine 409). Threonine 419 carries the phosphothreonine modification. Serine 429 is subject to Phosphoserine. Low complexity predominate over residues 430–444; sequence PGTTPPQARQAPAPT. Threonine 433 is subject to Phosphothreonine. Serine 458 bears the Phosphoserine mark. The segment covering 469 to 495 has biased composition (polar residues); that stretch reads LQPSSQNTKAHPSRRVTLNTLQAWSKT. Lysine 494 carries the post-translational modification N6-acetyllysine. Phosphothreonine is present on residues threonine 495, threonine 509, threonine 521, and threonine 531. The segment covering 509–526 has biased composition (low complexity); it reads TPPSSVPTSVISTPSTEE. At serine 538 the chain carries Phosphoserine. Over residues 541 to 552 the composition is skewed to basic and acidic residues; it reads ELKRPRLDENKG.

This sequence belongs to the WD repeat HIR1 family. Subunit of the CAF-1 complex that contains RBBP4, CHAF1B and CHAF1A. CHAF1A binds directly to CHAF1B. Only minor amounts of RBBP4 are complexed with CHAF1A and CHAF1B in G1 phase. In G2 and S phase also monomeric CHAF1B is detected. Interacts with histones H3.1, H3.2 and H3.1t. In terms of processing, differentially phosphorylated during cell cycle. During mitosis the p60 subunit of inactive CAF-1 is hyperphosphorylated and displaced into the cytosol. Progressivly dephosphorylated from G1 to S and G2 phase. Phosphorylated p60 is recruited to chromatin undergoing DNA repair after UV irradiation in G1, S or G2 phases.

Its subcellular location is the nucleus. The protein resides in the cytoplasm. Its function is as follows. Acts as a component of the histone chaperone complex chromatin assembly factor 1 (CAF-1), which assembles histone octamers onto DNA during replication and repair. CAF-1 performs the first step of the nucleosome assembly process, bringing newly synthesized histones H3 and H4 to replicating DNA; histones H2A/H2B can bind to this chromatin precursor subsequent to DNA replication to complete the histone octamer. The protein is Chromatin assembly factor 1 subunit B of Homo sapiens (Human).